Reading from the N-terminus, the 372-residue chain is 2-aminoethylphosphonate--pyruvate transaminase 2 (372 aa).

Lys192 is subject to N6-(pyridoxal phosphate)lysine.

The protein belongs to the class-V pyridoxal-phosphate-dependent aminotransferase family. PhnW subfamily. Homodimer. The cofactor is pyridoxal 5'-phosphate.

The catalysed reaction is (2-aminoethyl)phosphonate + pyruvate = phosphonoacetaldehyde + L-alanine. In terms of biological role, involved in phosphonate degradation. In Polaromonas sp. (strain JS666 / ATCC BAA-500), this protein is 2-aminoethylphosphonate--pyruvate transaminase 2.